A 731-amino-acid chain; its full sequence is Golgin subfamily A member 5 (731 aa).

An N-acetylserine modification is found at Ser2. Topologically, residues 2–698 (SWFVDLAGKA…IFLRRYPIAR (697 aa)) are cytoplasmic. A Dimethylated arginine modification is found at Arg89. Positions 93–222 (EASHPVENAS…PTPNDDGKSH (130 aa)) are disordered. Phosphoserine is present on Ser116. Residues 134-146 (PTGRVEIRKEKGK) show a composition bias toward basic and acidic residues. A compositionally biased stretch (low complexity) spans 147 to 167 (TPVFQSSQTSSVSSVNPSVTT). Residues 173-188 (ENSFGSQTHEAASNSD) are compositionally biased toward polar residues. Residues 189–199 (SSHEGQEESSK) show a composition bias toward basic and acidic residues. Residues 216-632 (NDDGKSHELS…EQQMNSASGS (417 aa)) are a coiled coil. A helical; Anchor for type IV membrane protein transmembrane segment spans residues 699–719 (VFVIIYMALLHLWVMIVLLTY). The Lumenal segment spans residues 720 to 731 (TPEMHHDQPYGK).

As to quaternary structure, homodimer. Interacts with RAB1A that has been activated by GTP-binding, and possibly also with OCRL1. Interacts with isoform CASP of CUX1. Highly phosphorylated during mitosis. Phosphorylation is barely detectable during interphase. As to expression, ubiquitous. Highly expressed in seminiferous tubules and Leydig cells in testis, and detected at much lower levels in the other tissues tested. Expression is very low or not detectable in spermatozoa.

The protein resides in the golgi apparatus membrane. Its function is as follows. Involved in maintaining Golgi structure. Stimulates the formation of Golgi stacks and ribbons. Involved in intra-Golgi retrograde transport. The sequence is that of Golgin subfamily A member 5 (GOLGA5) from Homo sapiens (Human).